A 309-amino-acid chain; its full sequence is Probable manganese-dependent inorganic pyrophosphatase (309 aa).

The Mn(2+) site is built by histidine 9, aspartate 13, aspartate 15, aspartate 75, histidine 97, and aspartate 149.

This sequence belongs to the PPase class C family. The cofactor is Mn(2+).

Its subcellular location is the cytoplasm. It catalyses the reaction diphosphate + H2O = 2 phosphate + H(+). The chain is Probable manganese-dependent inorganic pyrophosphatase from Bacillus cereus (strain B4264).